Consider the following 105-residue polypeptide: MRKRREGSAAPSTQEVTRVRTPRKENHEVLATVGSLLGSKRVNLQCMDGVVRMGRIPGSKNKKMWIREGDVVIVTPWEIQDTKADVIWKYTRPQIEWLERKGYLK.

The segment at M1–P22 is disordered. In terms of domain architecture, S1-like spans T17–T91.

The protein belongs to the eIF-1A family.

Functionally, seems to be required for maximal rate of protein biosynthesis. Enhances ribosome dissociation into subunits and stabilizes the binding of the initiator Met-tRNA(I) to 40 S ribosomal subunits. The protein is Translation initiation factor 1A 2 (eIF1A2) of Methanosarcina acetivorans (strain ATCC 35395 / DSM 2834 / JCM 12185 / C2A).